Consider the following 275-residue polypeptide: MSTGNLDFEQFRVFLEKACGILLGENKQYLVSSRLNKLMEQQGIKSLGELVQRIQAQPRGGLREQVVDAMTTNETLWFRDTYPFEVLKNKVIPEFIRNNPGQRLRMWSAACSSGQEPYSISMAIDEFERSNLGQLKMGAQIVATDLSGTMLTNCKTGEYDSLAIARGLSQERLQRYFDPKGPGRWAVKPAIRSRVEFRSFNLLDSYASLGKFDIVFCRNVLIYFSAQVKKDILLRIHSTLKPGGYLFLGASEALNGLPDHYQMVQCSPGIIYQAK.

Positions 1 to 275 constitute a CheR-type methyltransferase domain; it reads MSTGNLDFEQ…CSPGIIYQAK (275 aa). S-adenosyl-L-methionine contacts are provided by residues Asn-73, Thr-75, Arg-79, Glu-116, Asp-145, 201 to 202, and 218 to 219; these read NL and RN.

In terms of assembly, monomer.

It carries out the reaction L-glutamyl-[protein] + S-adenosyl-L-methionine = [protein]-L-glutamate 5-O-methyl ester + S-adenosyl-L-homocysteine. Functionally, methylation of the membrane-bound methyl-accepting chemotaxis proteins (MCP) to form gamma-glutamyl methyl ester residues in MCP. Methylates the McpS chemotaxis receptor. This Pseudomonas putida (strain ATCC 47054 / DSM 6125 / CFBP 8728 / NCIMB 11950 / KT2440) protein is Chemotaxis protein methyltransferase Cher2 (cheR2).